A 178-amino-acid chain; its full sequence is Large ribosomal subunit protein bL25 (178 aa).

This sequence belongs to the bacterial ribosomal protein bL25 family. CTC subfamily. As to quaternary structure, part of the 50S ribosomal subunit; part of the 5S rRNA/L5/L18/L25 subcomplex. Contacts the 5S rRNA. Binds to the 5S rRNA independently of L5 and L18.

Its function is as follows. This is one of the proteins that binds to the 5S RNA in the ribosome where it forms part of the central protuberance. The chain is Large ribosomal subunit protein bL25 from Helicobacter pylori (strain Shi470).